Here is a 361-residue protein sequence, read N- to C-terminus: Peptide chain release factor 1 (361 aa).

Gln-235 is subject to N5-methylglutamine. Residues 287–309 (QKEASAMRSAQVGSGDRSERIRT) form a disordered region.

It belongs to the prokaryotic/mitochondrial release factor family. Post-translationally, methylated by PrmC. Methylation increases the termination efficiency of RF1.

It is found in the cytoplasm. In terms of biological role, peptide chain release factor 1 directs the termination of translation in response to the peptide chain termination codons UAG and UAA. The polypeptide is Peptide chain release factor 1 (Chlamydia caviae (strain ATCC VR-813 / DSM 19441 / 03DC25 / GPIC) (Chlamydophila caviae)).